Here is a 514-residue protein sequence, read N- to C-terminus: tRNA-2-methylthio-N(6)-dimethylallyladenosine synthase (514 aa).

The segment at 1-21 (MNEEQRKASSVDVLAERDKKA) is disordered. Residues 68–186 (RTFLIKTYGC…LPEILEEAYL (119 aa)) form the MTTase N-terminal domain. Positions 77, 113, 147, 223, 227, and 230 each coordinate [4Fe-4S] cluster. Residues 209–440 (REGNIKAWVN…KKVGHYSQIA (232 aa)) enclose the Radical SAM core domain. Residues 442-505 (SKYEGQTVTV…QYSLNGSFIK (64 aa)) form the TRAM domain.

It belongs to the methylthiotransferase family. MiaB subfamily. Monomer. [4Fe-4S] cluster serves as cofactor.

It is found in the cytoplasm. The catalysed reaction is N(6)-dimethylallyladenosine(37) in tRNA + (sulfur carrier)-SH + AH2 + 2 S-adenosyl-L-methionine = 2-methylsulfanyl-N(6)-dimethylallyladenosine(37) in tRNA + (sulfur carrier)-H + 5'-deoxyadenosine + L-methionine + A + S-adenosyl-L-homocysteine + 2 H(+). Functionally, catalyzes the methylthiolation of N6-(dimethylallyl)adenosine (i(6)A), leading to the formation of 2-methylthio-N6-(dimethylallyl)adenosine (ms(2)i(6)A) at position 37 in tRNAs that read codons beginning with uridine. The sequence is that of tRNA-2-methylthio-N(6)-dimethylallyladenosine synthase from Staphylococcus aureus (strain USA300 / TCH1516).